Reading from the N-terminus, the 477-residue chain is tRNA-2-methylthio-N(6)-dimethylallyladenosine synthase (477 aa).

Positions 3–120 (KKLFIKTWGC…LPEMINQIKG (118 aa)) constitute an MTTase N-terminal domain. Residues C12, C49, C83, C157, C161, and C164 each contribute to the [4Fe-4S] cluster site. Residues 143–375 (KAEGPTAFVS…QNRITQQALR (233 aa)) enclose the Radical SAM core domain. Residues 378-441 (RNMIDSEQRV…ANSLRGDVLR (64 aa)) form the TRAM domain.

It belongs to the methylthiotransferase family. MiaB subfamily. Monomer. It depends on [4Fe-4S] cluster as a cofactor.

The protein resides in the cytoplasm. The enzyme catalyses N(6)-dimethylallyladenosine(37) in tRNA + (sulfur carrier)-SH + AH2 + 2 S-adenosyl-L-methionine = 2-methylsulfanyl-N(6)-dimethylallyladenosine(37) in tRNA + (sulfur carrier)-H + 5'-deoxyadenosine + L-methionine + A + S-adenosyl-L-homocysteine + 2 H(+). Functionally, catalyzes the methylthiolation of N6-(dimethylallyl)adenosine (i(6)A), leading to the formation of 2-methylthio-N6-(dimethylallyl)adenosine (ms(2)i(6)A) at position 37 in tRNAs that read codons beginning with uridine. This is tRNA-2-methylthio-N(6)-dimethylallyladenosine synthase from Pseudoalteromonas atlantica (strain T6c / ATCC BAA-1087).